Reading from the N-terminus, the 61-residue chain is [Val1,Thr6]-bradykinyl-Val,Asp (61 aa).

A signal peptide spans 1 to 22; the sequence is MAFLKKSLFLVLFLGVVSLSFC. The propeptide occupies 23-48; it reads EEEEREEHEEEKREAEAAESAENLIS. A disordered region spans residues 27–61; sequence REEHEEEKREAEAAESAENLISKRVPPGFTPFRVD.

As to expression, expressed by the skin glands. Expression levels in inguinal glands and granular glands are virtually the same.

The protein resides in the secreted. Functionally, induces contraction of rat ileum smooth muscle (EC(50)=2.73 uM) but has no activity towards rat smooth muscle from tail artery, urinary bladder or uterus. Binds to both bradykinin receptor B1 (BDKRB1) and B2 (BDKRB2); the effect via BDKRB1 is stronger. This chain is [Val1,Thr6]-bradykinyl-Val,Asp, found in Physalaemus nattereri (Cuyaba dwarf frog).